Consider the following 88-residue polypeptide: Small ribosomal subunit protein bS20 (88 aa).

Residues Met-1 to Arg-25 are disordered. The segment covering Lys-16–Arg-25 has biased composition (polar residues).

The protein belongs to the bacterial ribosomal protein bS20 family.

Binds directly to 16S ribosomal RNA. In Dichelobacter nodosus (strain VCS1703A), this protein is Small ribosomal subunit protein bS20.